Consider the following 195-residue polypeptide: MSLVPIVVEQTNRGERAYDIFSRLLKDRIVFLGDEINDTTASLVIAQMLFLEAEDPDKDIWLYINSPGGSITAGLAIYDTMQYIKPDVVTLCVGMAASMAAFLLAAGAKGKRFALPNSEIMIHQPWGGMQGQATDIKIHAERLLRLRDKLERILSENTGQPLEKIKADMERDYFMTAEEAKTYGIIDDILVRHKK.

The Nucleophile role is filled by Ser98. His123 is an active-site residue.

The protein belongs to the peptidase S14 family. Fourteen ClpP subunits assemble into 2 heptameric rings which stack back to back to give a disk-like structure with a central cavity, resembling the structure of eukaryotic proteasomes.

Its subcellular location is the cytoplasm. The enzyme catalyses Hydrolysis of proteins to small peptides in the presence of ATP and magnesium. alpha-casein is the usual test substrate. In the absence of ATP, only oligopeptides shorter than five residues are hydrolyzed (such as succinyl-Leu-Tyr-|-NHMec, and Leu-Tyr-Leu-|-Tyr-Trp, in which cleavage of the -Tyr-|-Leu- and -Tyr-|-Trp bonds also occurs).. In terms of biological role, cleaves peptides in various proteins in a process that requires ATP hydrolysis. Has a chymotrypsin-like activity. Plays a major role in the degradation of misfolded proteins. The polypeptide is ATP-dependent Clp protease proteolytic subunit (Caldanaerobacter subterraneus subsp. tengcongensis (strain DSM 15242 / JCM 11007 / NBRC 100824 / MB4) (Thermoanaerobacter tengcongensis)).